The sequence spans 858 residues: ATP-dependent DNA helicase Q-like SIM (858 aa).

The region spanning 2-44 (DLSSDQLVMKIVEMGFEKLDALEAVKAVGGKSCDDAVEYILKG) is the UBA domain. The region spanning 177 to 353 (LSTWVAHKDC…LESLHLSKET (177 aa)) is the Helicase ATP-binding domain. 190 to 197 (AATGSGKS) provides a ligand contact to ATP. The short motif at 288 to 291 (DEAH) is the DEAH box element. Residues 402 to 450 (LAVISRESEEQTDFGSHDSENIHETDYDEDEEDQENSLAKKNSSNGKEL) form a disordered region. The segment covering 416–426 (GSHDSENIHET) has biased composition (basic and acidic residues). Residues 427–436 (DYDEDEEDQE) are compositionally biased toward acidic residues. Polar residues predominate over residues 437 to 448 (NSLAKKNSSNGK). In terms of domain architecture, Helicase C-terminal spans 491 to 627 (EKQKDLEGLT…QTEQAYKMLS (137 aa)). The tract at residues 822 to 858 (RQRLERRERKPRRERKPRKKRTRGRSSTKLHPWRSKE) is disordered. Positions 830–858 (RKPRRERKPRKKRTRGRSSTKLHPWRSKE) are enriched in basic residues.

It belongs to the helicase family. RecQ subfamily. Mg(2+) is required as a cofactor. Mn(2+) serves as cofactor. As to expression, mostly expressed in roots and seedlings, and, to a lower extent, in leaves, shoots, shoot apical mersitem, inflorescences, flowers, siliques and seeds.

The protein resides in the nucleus. It catalyses the reaction Couples ATP hydrolysis with the unwinding of duplex DNA by translocating in the 3'-5' direction.. It carries out the reaction ATP + H2O = ADP + phosphate + H(+). In terms of biological role, plant specific, probable 3'-5' DNA helicase that may play a role in the repair of DNA. This is ATP-dependent DNA helicase Q-like SIM (RECQSIM) from Arabidopsis thaliana (Mouse-ear cress).